The sequence spans 579 residues: Solute carrier family 15 member 5 (579 aa).

11 helical membrane passes run 77 to 97 (CQAAILNLCFIGTSILTPVFV), 110 to 130 (LVYICLFLHFLGTALLSVVAF), 154 to 174 (LFYVALLTICLGIGGVRAIVC), 191 to 211 (SFFNWFYWLMNLNATIVFLGI), 221 to 241 (ALVLLIPFMSMLMAVITLHMI), 304 to 324 (TFFLTLLPLFIFQLLYRMCIM), 343 to 363 (GFLLPIAVMNAISSLPLLILA), 386 to 406 (CIIAGNLFAALSVMIAGFFEI), 422 to 442 (VLTVSSMPCFYLILQYVLLGV), 472 to 492 (TLFNGFGCFTGALLVKLVYLI), and 509 to 529 (SFFFFLASLTLLNVLGFCSVS).

This sequence belongs to the major facilitator superfamily. Proton-dependent oligopeptide transporter (POT/PTR) (TC 2.A.17) family.

The protein localises to the membrane. Its function is as follows. Proton oligopeptide cotransporter. The sequence is that of Solute carrier family 15 member 5 (SLC15A5) from Homo sapiens (Human).